Consider the following 304-residue polypeptide: Non-specific ribonucleoside hydrolase RihC (304 aa).

His-233 is an active-site residue.

The protein belongs to the IUNH family. RihC subfamily.

Functionally, hydrolyzes both purine and pyrimidine ribonucleosides with a broad-substrate specificity. This Klebsiella pneumoniae (strain 342) protein is Non-specific ribonucleoside hydrolase RihC.